The primary structure comprises 80 residues: Putative membrane protein insertion efficiency factor (80 aa).

The segment at 60 to 80 is disordered; sequence SKTGKDPVPDRFSLKRNQEGE. The span at 62–80 shows a compositional bias: basic and acidic residues; the sequence is TGKDPVPDRFSLKRNQEGE.

This sequence belongs to the UPF0161 family.

The protein localises to the cell membrane. In terms of biological role, could be involved in insertion of integral membrane proteins into the membrane. The protein is Putative membrane protein insertion efficiency factor of Streptococcus pneumoniae serotype 4 (strain ATCC BAA-334 / TIGR4).